The primary structure comprises 396 residues: Tryptophan synthase beta chain (396 aa).

Residue Lys-86 is modified to N6-(pyridoxal phosphate)lysine.

It belongs to the TrpB family. Tetramer of two alpha and two beta chains. Pyridoxal 5'-phosphate serves as cofactor.

The enzyme catalyses (1S,2R)-1-C-(indol-3-yl)glycerol 3-phosphate + L-serine = D-glyceraldehyde 3-phosphate + L-tryptophan + H2O. Its pathway is amino-acid biosynthesis; L-tryptophan biosynthesis; L-tryptophan from chorismate: step 5/5. Its function is as follows. The beta subunit is responsible for the synthesis of L-tryptophan from indole and L-serine. The sequence is that of Tryptophan synthase beta chain from Erwinia tasmaniensis (strain DSM 17950 / CFBP 7177 / CIP 109463 / NCPPB 4357 / Et1/99).